A 46-amino-acid polypeptide reads, in one-letter code: Ligatoxin-B (46 aa).

3 disulfides stabilise this stretch: Cys3/Cys40, Cys4/Cys32, and Cys16/Cys26.

Belongs to the plant thionin (TC 1.C.44) family.

Its subcellular location is the secreted. Thionins are small plant proteins which are toxic to animal cells. They seem to exert their toxic effect at the level of the cell membrane. Their precise function is not known. The chain is Ligatoxin-B from Phoradendron liga (Argentine mistletoe).